Here is a 446-residue protein sequence, read N- to C-terminus: Phosphoglucosamine mutase (446 aa).

Catalysis depends on Ser100, which acts as the Phosphoserine intermediate. Residues Ser100, Asp241, Asp243, and Asp245 each contribute to the Mg(2+) site. The residue at position 100 (Ser100) is a Phosphoserine.

It belongs to the phosphohexose mutase family. It depends on Mg(2+) as a cofactor. In terms of processing, activated by phosphorylation.

It catalyses the reaction alpha-D-glucosamine 1-phosphate = D-glucosamine 6-phosphate. In terms of biological role, catalyzes the conversion of glucosamine-6-phosphate to glucosamine-1-phosphate. In Methylobacterium nodulans (strain LMG 21967 / CNCM I-2342 / ORS 2060), this protein is Phosphoglucosamine mutase.